A 117-amino-acid chain; its full sequence is Probable non-functional immunoglobulin heavy variable 3-16 (117 aa).

Positions 1–19 (MEFGLSWVFLAGILKGVQC) are cleaved as a signal peptide. The interval 20-44 (EVQLVESGGGLVQPGGSLRLSCAAS) is framework-1. One can recognise an Ig-like domain in the interval 21 to 117 (VQLVESGGGL…EDMAVYYCVR (97 aa)). Cys-41 and Cys-115 are joined by a disulfide. Positions 45 to 52 (GFTFSNSD) are complementarity-determining-1. The tract at residues 53-69 (MNWARKAPGKGLEWVSG) is framework-2. The interval 70–77 (VSWNGSRT) is complementarity-determining-2. Residue Asn-73 is glycosylated (N-linked (GlcNAc...) asparagine). Residues 78 to 115 (HYVDSVKRRFIISRDNSRNSLYLQKNRRRAEDMAVYYC) are framework-3. Positions 116–117 (VR) are complementarity-determining-3.

As to quaternary structure, immunoglobulins are composed of two identical heavy chains and two identical light chains; disulfide-linked.

It is found in the secreted. The protein resides in the cell membrane. Probable non-functional open reading frame (ORF) of V region of the variable domain of immunoglobulin heavy chains. Non-functional ORF generally cannot participate in the synthesis of a productive immunoglobulin chain due to altered V-(D)-J or switch recombination and/or splicing site (at mRNA level) and/or conserved amino acid change (protein level). Immunoglobulins, also known as antibodies, are membrane-bound or secreted glycoproteins produced by B lymphocytes. In the recognition phase of humoral immunity, the membrane-bound immunoglobulins serve as receptors which, upon binding of a specific antigen, trigger the clonal expansion and differentiation of B lymphocytes into immunoglobulins-secreting plasma cells. Secreted immunoglobulins mediate the effector phase of humoral immunity, which results in the elimination of bound antigens. The antigen binding site is formed by the variable domain of one heavy chain, together with that of its associated light chain. Thus, each immunoglobulin has two antigen binding sites with remarkable affinity for a particular antigen. The variable domains are assembled by a process called V-(D)-J rearrangement and can then be subjected to somatic hypermutations which, after exposure to antigen and selection, allow affinity maturation for a particular antigen. The chain is Probable non-functional immunoglobulin heavy variable 3-16 from Homo sapiens (Human).